The following is a 540-amino-acid chain: Glucose-6-phosphate isomerase (540 aa).

Glutamate 350 (proton donor) is an active-site residue. Residues histidine 381 and lysine 503 contribute to the active site.

This sequence belongs to the GPI family.

Its subcellular location is the cytoplasm. It catalyses the reaction alpha-D-glucose 6-phosphate = beta-D-fructose 6-phosphate. It participates in carbohydrate biosynthesis; gluconeogenesis. Its pathway is carbohydrate degradation; glycolysis; D-glyceraldehyde 3-phosphate and glycerone phosphate from D-glucose: step 2/4. Functionally, catalyzes the reversible isomerization of glucose-6-phosphate to fructose-6-phosphate. This Burkholderia cenocepacia (strain ATCC BAA-245 / DSM 16553 / LMG 16656 / NCTC 13227 / J2315 / CF5610) (Burkholderia cepacia (strain J2315)) protein is Glucose-6-phosphate isomerase.